The following is a 473-amino-acid chain: NAD-dependent protein deacetylase SRT1 (473 aa).

Residues 27–267 (SHLLQCKIEE…AGVMESLNMK (241 aa)) enclose the Deacetylase sirtuin-type domain. NAD(+) is bound by residues 52–71 (GAGISTSCGIPDFRGPKGIW) and 114–117 (QNVD). His-134 serves as the catalytic Proton acceptor. The Zn(2+) site is built by Cys-142, Cys-145, Cys-167, and Cys-172. NAD(+) is bound by residues 209-211 (GTS), 235-237 (NLQ), and Val-253. The tract at residues 447–473 (LEGSGTSRKRSRTGKRKSKALAEETKA) is disordered. Positions 453–465 (SRKRSRTGKRKSK) are enriched in basic residues.

Belongs to the sirtuin family. Class IV subfamily. In terms of assembly, binds to the promoter region of genes influenced by ethylene. Interacts with ENAP1; this interaction is enhanced in the presence of ethylene. The cofactor is Zn(2+).

The protein localises to the nucleus. The catalysed reaction is N(6)-acetyl-L-lysyl-[protein] + NAD(+) + H2O = 2''-O-acetyl-ADP-D-ribose + nicotinamide + L-lysyl-[protein]. In terms of biological role, NAD-dependent protein deacetylase. Has deacetylase activity towards H3K9Ac. May have a function in the safeguard against genome instability and DNA damage to ensure plant cell growth. Involved in responses to ethylene leading to the transcriptional repression of some ethylene-responsive genes via the regulation of histone acetylation H3K9Ac. In Arabidopsis thaliana (Mouse-ear cress), this protein is NAD-dependent protein deacetylase SRT1.